Here is a 215-residue protein sequence, read N- to C-terminus: Cytochrome b6 (215 aa).

The chain crosses the membrane as a helical span at residues 32–52 (IFHCLGGITLTCFLVQVATGF). C35 serves as a coordination point for heme c. Heme b is bound by residues H86 and H100. 3 helical membrane passes run 90–110 (ASMM…TGGF), 116–136 (LTWV…VTGY), and 186–206 (LHTF…FPMI). Heme b is bound by residues H187 and H202.

It belongs to the cytochrome b family. PetB subfamily. In terms of assembly, the 4 large subunits of the cytochrome b6-f complex are cytochrome b6, subunit IV (17 kDa polypeptide, PetD), cytochrome f and the Rieske protein, while the 4 small subunits are PetG, PetL, PetM and PetN. The complex functions as a dimer. It depends on heme b as a cofactor. Heme c serves as cofactor.

Its subcellular location is the plastid. The protein resides in the chloroplast thylakoid membrane. Functionally, component of the cytochrome b6-f complex, which mediates electron transfer between photosystem II (PSII) and photosystem I (PSI), cyclic electron flow around PSI, and state transitions. This Calycanthus floridus var. glaucus (Eastern sweetshrub) protein is Cytochrome b6.